The sequence spans 85 residues: UPF0335 protein BH15140 (85 aa).

Belongs to the UPF0335 family.

This is UPF0335 protein BH15140 from Bartonella henselae (strain ATCC 49882 / DSM 28221 / CCUG 30454 / Houston 1) (Rochalimaea henselae).